A 194-amino-acid chain; its full sequence is GTP cyclohydrolase 1 (194 aa).

Residues C83, H86, and C155 each contribute to the Zn(2+) site.

It belongs to the GTP cyclohydrolase I family. In terms of assembly, homomer.

It carries out the reaction GTP + H2O = 7,8-dihydroneopterin 3'-triphosphate + formate + H(+). Its pathway is cofactor biosynthesis; 7,8-dihydroneopterin triphosphate biosynthesis; 7,8-dihydroneopterin triphosphate from GTP: step 1/1. This Streptococcus pyogenes serotype M49 (strain NZ131) protein is GTP cyclohydrolase 1.